Here is an 83-residue protein sequence, read N- to C-terminus: Acyl carrier protein MmaB (83 aa).

A Carrier domain is found at 3–83 (DPVRQRILLA…LSQSELESPT (81 aa)). Residue S39 is modified to O-(pantetheine 4'-phosphoryl)serine.

This sequence belongs to the acyl carrier protein (ACP) family. Pantetheine 4'-phosphate serves as cofactor.

It functions in the pathway lipid metabolism; fatty acid metabolism. Acyl-carrier protein (ACP) involved in the biosynthesis of a unique class of isonitrile lipopeptides (INLPs) that seem to play a role in metal acquisition in M.marinum. Is the dedicated ACP for the loading of activated acyl groups catalyzed by MmaC. This is Acyl carrier protein MmaB from Mycobacterium marinum (strain ATCC BAA-535 / M).